A 373-amino-acid polypeptide reads, in one-letter code: Dual-specificity RNA methyltransferase RlmN (373 aa).

The Proton acceptor role is filled by E94. One can recognise a Radical SAM core domain in the interval 100 to 339 (DGDRATLCVS…VTVRKTRGDD (240 aa)). C107 and C344 are disulfide-bonded. [4Fe-4S] cluster-binding residues include C114, C118, and C121. S-adenosyl-L-methionine is bound by residues 168–169 (GE), S200, 222–224 (SLH), and N301. C344 (S-methylcysteine intermediate) is an active-site residue.

Belongs to the radical SAM superfamily. RlmN family. [4Fe-4S] cluster serves as cofactor.

It localises to the cytoplasm. The enzyme catalyses adenosine(2503) in 23S rRNA + 2 reduced [2Fe-2S]-[ferredoxin] + 2 S-adenosyl-L-methionine = 2-methyladenosine(2503) in 23S rRNA + 5'-deoxyadenosine + L-methionine + 2 oxidized [2Fe-2S]-[ferredoxin] + S-adenosyl-L-homocysteine. It carries out the reaction adenosine(37) in tRNA + 2 reduced [2Fe-2S]-[ferredoxin] + 2 S-adenosyl-L-methionine = 2-methyladenosine(37) in tRNA + 5'-deoxyadenosine + L-methionine + 2 oxidized [2Fe-2S]-[ferredoxin] + S-adenosyl-L-homocysteine. Functionally, specifically methylates position 2 of adenine 2503 in 23S rRNA and position 2 of adenine 37 in tRNAs. m2A2503 modification seems to play a crucial role in the proofreading step occurring at the peptidyl transferase center and thus would serve to optimize ribosomal fidelity. The sequence is that of Dual-specificity RNA methyltransferase RlmN from Photobacterium profundum (strain SS9).